Consider the following 1013-residue polypeptide: Tolloid-like protein 1 (1013 aa).

Residues 1–30 (MGLQALSPRMLLWLVVSGIVFSRVLWVCAG) form the signal peptide. Positions 31–147 (LDYDYTFDGN…EQSEKNRVPR (117 aa)) are excised as a propeptide. The interval 124-150 (QNNTMKGKAPPKLSEQSEKNRVPRAAT) is disordered. The Peptidase M12A domain maps to 148 to 347 (AATSRTERIW…AQARKLYRCP (200 aa)). N-linked (GlcNAc...) asparagine glycosylation is present at Asn-169. 4 disulfide bridges follow: Cys-190–Cys-346, Cys-210–Cys-232, Cys-212–Cys-213, and Cys-349–Cys-375. Position 240 (His-240) interacts with Zn(2+). Residue Glu-241 is part of the active site. Zn(2+)-binding residues include His-244 and His-250. 2 consecutive CUB domains span residues 349 to 461 (CGET…YEAI) and 462 to 574 (CGGE…FFKE). Asn-359 and Asn-390 each carry an N-linked (GlcNAc...) asparagine glycan. Intrachain disulfides connect Cys-402/Cys-424, Cys-462/Cys-488, Cys-515/Cys-537, Cys-578/Cys-590, Cys-586/Cys-599, Cys-601/Cys-614, Cys-618/Cys-644, Cys-671/Cys-693, Cys-734/Cys-745, Cys-741/Cys-754, Cys-756/Cys-769, Cys-774/Cys-800, Cys-827/Cys-849, Cys-887/Cys-917, and Cys-944/Cys-966. The EGF-like 1; calcium-binding domain occupies 574–615 (EEDECAKPDRGGCEQRCLNTLGSYQCACEPGYELGPDRRSCE). The region spanning 618–730 (CGGLLTKLNG…KGFKAHFFSD (113 aa)) is the CUB 3 domain. An N-linked (GlcNAc...) asparagine glycan is attached at Asn-626. The EGF-like 2; calcium-binding domain occupies 730–770 (DKDECSKDNGGCQHECVNTMGSYTCQCRNGFVLHENKHDCK). CUB domains follow at residues 774 to 886 (CEQK…HSTE) and 887 to 1003 (CGGR…YKSI).

Zn(2+) is required as a cofactor. Highly expressed in brain and kidney and weakly in lung, skeletal muscle. A perceptible level of expression is observed in heart and testis.

The protein resides in the secreted. In terms of biological role, protease which processes procollagen C-propeptides, such as chordin, pro-biglycan and pro-lysyl oxidase. Required for the embryonic development, especially heart development. Predominant protease, which in the development, influences dorsal-ventral patterning and skeletogenesis. The chain is Tolloid-like protein 1 (Tll1) from Mus musculus (Mouse).